Reading from the N-terminus, the 283-residue chain is E3 ubiquitin-protein ligase MARCHF5 (283 aa).

The RING-CH-type zinc finger occupies 9 to 78 (VQQMLDRSCW…PQCNAEYLIV (70 aa)). Zn(2+)-binding residues include Cys17, Cys20, Cys36, Cys38, His46, Cys49, Cys68, and Cys71. 4 helical membrane passes run 102–122 (FAAA…YGAV), 142–162 (PLFL…GKMI), 212–232 (ILCG…LMFS), and 241–261 (TILG…YFKQ).

The protein resides in the mitochondrion outer membrane. Its subcellular location is the endoplasmic reticulum membrane. The catalysed reaction is S-ubiquitinyl-[E2 ubiquitin-conjugating enzyme]-L-cysteine + [acceptor protein]-L-lysine = [E2 ubiquitin-conjugating enzyme]-L-cysteine + N(6)-ubiquitinyl-[acceptor protein]-L-lysine.. It participates in protein modification; protein ubiquitination. Mitochondrial E3 ubiquitin-protein ligase that plays a crucial role in the control of mitochondrial morphology by acting as a positive regulator of mitochondrial fission. May play a role in the prevention of cell senescence acting as a regulator of mitochondrial quality control. The protein is E3 ubiquitin-protein ligase MARCHF5 (marchf5) of Xenopus laevis (African clawed frog).